Here is a 237-residue protein sequence, read N- to C-terminus: Uridylate kinase (237 aa).

12 to 15 (KLSG) provides a ligand contact to ATP. The interval 20 to 25 (GDEGFG) is involved in allosteric activation by GTP. Gly54 lines the UMP pocket. The ATP site is built by Gly55 and Arg59. UMP-binding positions include Asp74 and 135–142 (TGSPFFTT). The ATP site is built by Thr162, Tyr168, and Asp171.

The protein belongs to the UMP kinase family. As to quaternary structure, homohexamer.

The protein localises to the cytoplasm. The catalysed reaction is UMP + ATP = UDP + ADP. It participates in pyrimidine metabolism; CTP biosynthesis via de novo pathway; UDP from UMP (UMPK route): step 1/1. Its activity is regulated as follows. Allosterically activated by GTP. Inhibited by UTP. In terms of biological role, catalyzes the reversible phosphorylation of UMP to UDP. The protein is Uridylate kinase of Haemophilus ducreyi (strain 35000HP / ATCC 700724).